The primary structure comprises 725 residues: Consortin (725 aa).

Disordered regions lie at residues 1-72, 103-124, 296-353, 375-397, and 485-510; these read MDDS…LNNN, GKDK…AKKI, LLVS…SLSV, TQSS…CEDD, and QQPD…ENVL. Over 1-664 the chain is Cytoplasmic; sequence MDDSDTPTYY…LDQDEVGGGS (664 aa). The segment covering 63 to 72 has biased composition (polar residues); it reads VSEQDSLNNN. Residues 109–121 are compositionally biased toward basic residues; the sequence is PGKRSPRSKKGTA. Basic and acidic residues predominate over residues 300-314; it reads EDPKEGGATTKESES. Composition is skewed to polar residues over residues 343 to 353 and 375 to 388; these read DVQTDSPSLSV and TQSS…SGPD. A helical membrane pass occupies residues 665–685; sequence CILLVLLCIATVFLSVGGTAL. The Extracellular portion of the chain corresponds to 686 to 725; it reads YCTFGDMESPVCTDFADNMDFYYTKLLQGVAELKHWIYLS.

This sequence belongs to the CNST family. In terms of assembly, interacts with connexins GJA1/CX43, GJB1/CX32, GJB2/CX26, GJB3/CX31, GJB6/CX30 and GJC1/CX45. Also interacts with GGA1 and GGA2. Does not interact with PANX1.

Its subcellular location is the cell membrane. It localises to the golgi apparatus. The protein localises to the trans-Golgi network membrane. It is found in the cytoplasmic vesicle. The protein resides in the secretory vesicle. Required for targeting of connexins to the plasma membrane. This chain is Consortin (CNST), found in Homo sapiens (Human).